Here is a 329-residue protein sequence, read N- to C-terminus: Diaminopimelate epimerase (329 aa).

The substrate site is built by Asn14 and Asn73. Catalysis depends on Cys82, which acts as the Proton donor. Residues Gly83 to Asn84, Asn170, Asn206, and Glu224 to Arg225 each bind substrate. The Proton acceptor role is filled by Cys233. Position 234 to 235 (Gly234 to Thr235) interacts with substrate.

It belongs to the diaminopimelate epimerase family. Homodimer.

Its subcellular location is the cytoplasm. It catalyses the reaction (2S,6S)-2,6-diaminopimelate = meso-2,6-diaminopimelate. Its pathway is amino-acid biosynthesis; L-lysine biosynthesis via DAP pathway; DL-2,6-diaminopimelate from LL-2,6-diaminopimelate: step 1/1. Catalyzes the stereoinversion of LL-2,6-diaminopimelate (L,L-DAP) to meso-diaminopimelate (meso-DAP), a precursor of L-lysine and an essential component of the bacterial peptidoglycan. This is Diaminopimelate epimerase from Listeria monocytogenes serovar 1/2a (strain ATCC BAA-679 / EGD-e).